We begin with the raw amino-acid sequence, 151 residues long: Large ribosomal subunit protein bL9 (151 aa).

The protein belongs to the bacterial ribosomal protein bL9 family.

Its function is as follows. Binds to the 23S rRNA. The sequence is that of Large ribosomal subunit protein bL9 from Dehalococcoides mccartyi (strain ATCC BAA-2100 / JCM 16839 / KCTC 5957 / BAV1).